A 673-amino-acid chain; its full sequence is MSKPFKLNSAFKPSGDQPEAIRRLEEGLEDGLAHQTLLGVTGSGKTFTIANVIADLQRPTMVLAPNKTLAAQLYGEMKEFFPENAVEYFVSYYDYYQPEAYVPSSDTFIEKDASVNEHIEQMRLSATKAMLERRDVVVVASVSAIYGLGDPDLYLKMMLHLTVGMIIDQRAILRRLAELQYARNDQAFQRGTFRVRGEVIDIFPAESDDIALRVELFDEEVERLSLFDPLTGQIVSTIPRFTIYPKTHYVTPRERIVQAMEEIKEELAARRKVLLENNKLLEEQRLTQRTQFDLEMMNELGYCSGIENYSRFLSGRGPGEPPPTLFDYLPADGLLVVDESHVTIPQIGGMYRGDRARKETLVEYGFRLPSALDNRPLKFEEFEALAPQTIYVSATPGNYELEKSGGDVVDQVVRPTGLLDPIIEVRPVATQVDDLLSEIRQRAAINERVLVTTLTKRMAEDLTEYLEEHGERVRYLHSDIDTVERMEIIRDLRLGEFDVLVGINLLREGLDMPEVSLVAILDADKEGFLRSERSLIQTIGRAARNVNGKAILYGDKITPSMAKAIGETERRREKQQKYNEEHGITPQGLNKKVVDILALGQNIAKTKAKGRGKSRPIVEPDNVPMDMSPKALLQKIHELEGLMMQHAQNLEFEEAAQIRDQLHQLRELFIAAS.

The Helicase ATP-binding domain occupies 26 to 414; that stretch reads EGLEDGLAHQ…GGDVVDQVVR (389 aa). Residue 39–46 participates in ATP binding; it reads GVTGSGKT. The short motif at 92 to 115 is the Beta-hairpin element; the sequence is YYDYYQPEAYVPSSDTFIEKDASV. A Helicase C-terminal domain is found at 431–597; that stretch reads QVDDLLSEIR…GLNKKVVDIL (167 aa). The region spanning 633–668 is the UVR domain; sequence LQKIHELEGLMMQHAQNLEFEEAAQIRDQLHQLREL.

This sequence belongs to the UvrB family. As to quaternary structure, forms a heterotetramer with UvrA during the search for lesions. Interacts with UvrC in an incision complex.

It is found in the cytoplasm. Functionally, the UvrABC repair system catalyzes the recognition and processing of DNA lesions. A damage recognition complex composed of 2 UvrA and 2 UvrB subunits scans DNA for abnormalities. Upon binding of the UvrA(2)B(2) complex to a putative damaged site, the DNA wraps around one UvrB monomer. DNA wrap is dependent on ATP binding by UvrB and probably causes local melting of the DNA helix, facilitating insertion of UvrB beta-hairpin between the DNA strands. Then UvrB probes one DNA strand for the presence of a lesion. If a lesion is found the UvrA subunits dissociate and the UvrB-DNA preincision complex is formed. This complex is subsequently bound by UvrC and the second UvrB is released. If no lesion is found, the DNA wraps around the other UvrB subunit that will check the other stand for damage. In Shigella dysenteriae serotype 1 (strain Sd197), this protein is UvrABC system protein B.